We begin with the raw amino-acid sequence, 553 residues long: Putative transport protein KPK_0013 (553 aa).

The next 5 helical transmembrane spans lie at 4 to 24, 28 to 48, 65 to 85, 95 to 115, and 158 to 178; these read IALTVSVLALVAVVGLWIGNV, GVGFGIGGVLFGGIIVGHFVD, FGLILFVYTIGIQVGPGFFAS, LFAILIVILGGLVTAVLHKLF, and MSYAMAYPFGICGILLTMWLV. 2 consecutive RCK C-terminal domains span residues 192–276 and 279–361; these read RFEE…VIGQ and ATSL…ELGN. The next 6 helical transmembrane spans lie at 371–391, 403–425, 437–457, 464–484, 493–513, and 532–552; these read MLPVFIGIGLGVLLGSIPLFI, AGGPLIMALILGRIGSIGKLYWF, LGIVLFLAVVGLKSGGDFVAT, LSWIAYGIFITAIPLLTVGIL, YLTLCGMLAGSMTDPPALAFA, and PLVMFLRIITPQLLAVLFWGL.

This sequence belongs to the AAE transporter (TC 2.A.81) family. YidE subfamily.

It is found in the cell membrane. The protein is Putative transport protein KPK_0013 of Klebsiella pneumoniae (strain 342).